A 461-amino-acid polypeptide reads, in one-letter code: Zinc transporter 6 (461 aa).

The Cytoplasmic portion of the chain corresponds to 1-33 (MGTIHLFRKPQRSFFGKLLQEFRLVAADRRSWK). Residues 34–54 (ILLFGAINLTCTGFLLMWCSS) traverse the membrane as a helical segment. The Extracellular portion of the chain corresponds to 55 to 64 (TNSIALTAYT). A helical membrane pass occupies residues 65-85 (YLTIFDLFSLITCLVSYWVMM). Over 86 to 98 (RKPSPAYSFGFER) the chain is Cytoplasmic. A helical membrane pass occupies residues 99 to 119 (LEVLAVFASTVLAQLGALFIL). Residues 120-134 (KESAERFLEQPEIHT) are Extracellular-facing. Residues 135-155 (GRLLVGTFVALSFNLFTMLSI) traverse the membrane as a helical segment. The Cytoplasmic segment spans residues 156-200 (RNKPFAYVSEAASTSWLQEHVADLSRSLCGIIPGLSSIFLPRMNP). A helical transmembrane segment spans residues 201–221 (FVLIDLAGAFALCITYMLIEI). Residues 222–223 (NN) lie on the Extracellular side of the membrane. The helical transmembrane segment at 224 to 244 (YFAVDTASAIAIALMTFGTMY) threads the bilayer. Residues 245 to 461 (PMSVYSGKVL…TNNRIGQPRP (217 aa)) lie on the Cytoplasmic side of the membrane. The interval 362-393 (PPLKGTDDSNPVTSTPTKPSSPPPEFSFNTPG) is disordered. Positions 370-379 (SNPVTSTPTK) are enriched in low complexity.

It belongs to the cation diffusion facilitator (CDF) transporter (TC 2.A.4) family. SLC30A subfamily. Heterodimer with SLC30A5; form a functional zinc ion transmembrane transporter.

It is found in the golgi apparatus. The protein localises to the trans-Golgi network membrane. Functionally, has probably no intrinsic transporter activity but together with SLC30A5 forms a functional zinc ion:proton antiporter heterodimer, mediating zinc entry into the lumen of organelles along the secretory pathway. As part of that zinc ion:proton antiporter, contributes to zinc ion homeostasis within the early secretory pathway and regulates the activation and folding of enzymes like alkaline phosphatases and enzymes involved in phosphatidylinositol glycan anchor biosynthesis. The polypeptide is Zinc transporter 6 (SLC30A6) (Bos taurus (Bovine)).